We begin with the raw amino-acid sequence, 300 residues long: NAD kinase (300 aa).

D75 functions as the Proton acceptor in the catalytic mechanism. Residues 75–76, 149–150, R177, D179, 190–195, A214, and Q248 contribute to the NAD(+) site; these read DG, ND, and TAYALS.

Belongs to the NAD kinase family. The cofactor is a divalent metal cation.

It is found in the cytoplasm. It catalyses the reaction NAD(+) + ATP = ADP + NADP(+) + H(+). In terms of biological role, involved in the regulation of the intracellular balance of NAD and NADP, and is a key enzyme in the biosynthesis of NADP. Catalyzes specifically the phosphorylation on 2'-hydroxyl of the adenosine moiety of NAD to yield NADP. This Paraburkholderia phytofirmans (strain DSM 17436 / LMG 22146 / PsJN) (Burkholderia phytofirmans) protein is NAD kinase.